Here is a 235-residue protein sequence, read N- to C-terminus: Large ribosomal subunit protein uL3 (235 aa).

It belongs to the universal ribosomal protein uL3 family. Part of the 50S ribosomal subunit. Forms a cluster with proteins L14 and L19.

Functionally, one of the primary rRNA binding proteins, it binds directly near the 3'-end of the 23S rRNA, where it nucleates assembly of the 50S subunit. This chain is Large ribosomal subunit protein uL3, found in Frankia casuarinae (strain DSM 45818 / CECT 9043 / HFP020203 / CcI3).